Reading from the N-terminus, the 131-residue chain is uncharacterized protein (131 aa).

It is found in the mitochondrion. This is an uncharacterized protein from Arabidopsis thaliana (Mouse-ear cress).